A 248-amino-acid chain; its full sequence is Pyridoxine 5'-phosphate synthase (248 aa).

Asn-12 is a 3-amino-2-oxopropyl phosphate binding site. 14 to 15 is a binding site for 1-deoxy-D-xylulose 5-phosphate; the sequence is DH. A 3-amino-2-oxopropyl phosphate-binding site is contributed by Arg-23. His-48 serves as the catalytic Proton acceptor. 1-deoxy-D-xylulose 5-phosphate contacts are provided by Arg-50 and His-55. The active-site Proton acceptor is the Glu-75. Thr-105 contributes to the 1-deoxy-D-xylulose 5-phosphate binding site. Catalysis depends on His-196, which acts as the Proton donor. Residues Gly-197 and 218–219 each bind 3-amino-2-oxopropyl phosphate; that span reads GH.

This sequence belongs to the PNP synthase family. Homooctamer; tetramer of dimers.

The protein resides in the cytoplasm. The enzyme catalyses 3-amino-2-oxopropyl phosphate + 1-deoxy-D-xylulose 5-phosphate = pyridoxine 5'-phosphate + phosphate + 2 H2O + H(+). It functions in the pathway cofactor biosynthesis; pyridoxine 5'-phosphate biosynthesis; pyridoxine 5'-phosphate from D-erythrose 4-phosphate: step 5/5. Functionally, catalyzes the complicated ring closure reaction between the two acyclic compounds 1-deoxy-D-xylulose-5-phosphate (DXP) and 3-amino-2-oxopropyl phosphate (1-amino-acetone-3-phosphate or AAP) to form pyridoxine 5'-phosphate (PNP) and inorganic phosphate. The polypeptide is Pyridoxine 5'-phosphate synthase (Pseudomonas aeruginosa (strain UCBPP-PA14)).